The primary structure comprises 257 residues: Imidazole glycerol phosphate synthase subunit HisF (257 aa).

Active-site residues include Asp12 and Asp131.

The protein belongs to the HisA/HisF family. In terms of assembly, heterodimer of HisH and HisF.

The protein resides in the cytoplasm. It carries out the reaction 5-[(5-phospho-1-deoxy-D-ribulos-1-ylimino)methylamino]-1-(5-phospho-beta-D-ribosyl)imidazole-4-carboxamide + L-glutamine = D-erythro-1-(imidazol-4-yl)glycerol 3-phosphate + 5-amino-1-(5-phospho-beta-D-ribosyl)imidazole-4-carboxamide + L-glutamate + H(+). It functions in the pathway amino-acid biosynthesis; L-histidine biosynthesis; L-histidine from 5-phospho-alpha-D-ribose 1-diphosphate: step 5/9. In terms of biological role, IGPS catalyzes the conversion of PRFAR and glutamine to IGP, AICAR and glutamate. The HisF subunit catalyzes the cyclization activity that produces IGP and AICAR from PRFAR using the ammonia provided by the HisH subunit. The protein is Imidazole glycerol phosphate synthase subunit HisF of Paraburkholderia xenovorans (strain LB400).